A 152-amino-acid polypeptide reads, in one-letter code: CMT1A duplicated region transcript 4 protein (152 aa).

The span at 1-11 (MDARRMKKEEG) shows a compositional bias: basic and acidic residues. Disordered regions lie at residues 1-23 (MDAR…RKLL) and 60-89 (ERPW…GKAV). A compositionally biased stretch (polar residues) spans 65 to 74 (SRQNKPSSVI).

In terms of tissue distribution, expressed in fetal skeletal muscle and kidney.

The protein is CMT1A duplicated region transcript 4 protein (CDRT4) of Homo sapiens (Human).